The primary structure comprises 344 residues: N-acetyl-gamma-glutamyl-phosphate reductase (344 aa).

The active site involves Cys150.

This sequence belongs to the NAGSA dehydrogenase family. Type 1 subfamily.

It localises to the cytoplasm. It carries out the reaction N-acetyl-L-glutamate 5-semialdehyde + phosphate + NADP(+) = N-acetyl-L-glutamyl 5-phosphate + NADPH + H(+). Its pathway is amino-acid biosynthesis; L-arginine biosynthesis; N(2)-acetyl-L-ornithine from L-glutamate: step 3/4. Its function is as follows. Catalyzes the NADPH-dependent reduction of N-acetyl-5-glutamyl phosphate to yield N-acetyl-L-glutamate 5-semialdehyde. This is N-acetyl-gamma-glutamyl-phosphate reductase from Pseudomonas paraeruginosa (strain DSM 24068 / PA7) (Pseudomonas aeruginosa (strain PA7)).